Consider the following 476-residue polypeptide: G-patch domain and KOW motifs-containing protein (476 aa).

Residues 1–96 (MADSKEGVLP…PGPSTDTGAL (96 aa)) form a disordered region. Ala-2 bears the N-acetylalanine mark. Lys-5 is covalently cross-linked (Glycyl lysine isopeptide (Lys-Gly) (interchain with G-Cter in SUMO2)). A compositionally biased stretch (polar residues) spans 13–26 (AASTAPISFGFTRT). Ser-27 carries the phosphoserine; by PKA modification. 2 positions are modified to phosphoserine: Ser-35 and Ser-42. Over residues 43-58 (PEEKDFLKTVEGRELQ) the composition is skewed to basic and acidic residues. The residue at position 115 (Ser-115) is a Phosphoserine. Positions 164–210 (VEAYGLAMLRGMGWKPGEGIGRTFNQVVKPRVNSLRPKGLGLGANLT) constitute a G-patch domain. The segment at 203–244 (LGLGANLTEAQALTPTGPSRMPRPDEEQEKDKEDQPQGLVPG) is disordered. The span at 210-219 (TEAQALTPTG) shows a compositional bias: polar residues. The residue at position 216 (Thr-216) is a Phosphothreonine. Residues 224-237 (PRPDEEQEKDKEDQ) show a composition bias toward basic and acidic residues. Residues 240 to 267 (GLVPGGAVVVLSGPHRGLYGKVEGLDPD) form the KOW 1 domain. Position 316 is a phosphothreonine; by PKA (Thr-316). Residues 327–353 (DNSERKRKHLPDRQDGPAAKSEKAAPR) are disordered. Over residues 337–351 (PDRQDGPAAKSEKAA) the composition is skewed to basic and acidic residues. Residues 415–442 (PKAEGDRVMVVLGPQTGRVGHLLSRDRA) enclose the KOW 2 domain. The residue at position 471 (Ser-471) is a Phosphoserine. At Thr-473 the chain carries Phosphothreonine.

This sequence belongs to the MOS2 family. As to quaternary structure, component of the minor spliceosome, which splices U12-type introns. Interacts with PRKX. Interacts with DHX16. Interacts with PRKACB. Phosphorylation regulates its ability to bind RNA.

It localises to the nucleus. In terms of biological role, RNA-binding protein involved in pre-mRNA splicing. As a component of the minor spliceosome, involved in the splicing of U12-type introns in pre-mRNAs. In Homo sapiens (Human), this protein is G-patch domain and KOW motifs-containing protein (GPKOW).